Consider the following 548-residue polypeptide: Chaperonin GroEL (548 aa).

Residues 30–33 (TLGP), lysine 51, 87–91 (DGTTT), glycine 415, 479–481 (NAA), and aspartate 495 each bind ATP.

Belongs to the chaperonin (HSP60) family. Forms a cylinder of 14 subunits composed of two heptameric rings stacked back-to-back. Interacts with the co-chaperonin GroES.

It localises to the cytoplasm. It catalyses the reaction ATP + H2O + a folded polypeptide = ADP + phosphate + an unfolded polypeptide.. Together with its co-chaperonin GroES, plays an essential role in assisting protein folding. The GroEL-GroES system forms a nano-cage that allows encapsulation of the non-native substrate proteins and provides a physical environment optimized to promote and accelerate protein folding. This Aliivibrio fischeri (strain MJ11) (Vibrio fischeri) protein is Chaperonin GroEL.